The chain runs to 475 residues: NADH-quinone oxidoreductase subunit N (475 aa).

A run of 14 helical transmembrane segments spans residues 5-25 (LALP…FGVV), 32-52 (FLSC…LVVM), 71-91 (FMKI…VGYA), 99-119 (FEFP…ASSE), 121-141 (LMTL…LCAF), 155-175 (YFVL…LVYG), 193-213 (STAV…GLTF), 232-252 (PTSV…ALLL), 266-286 (WQIL…LAAI), 294-314 (LMAY…CAGT), 322-342 (LVYL…IIAM), 366-386 (ATAM…AGFF), 389-409 (MMVF…IGVV), and 439-459 (LSLS…LLVL).

The protein belongs to the complex I subunit 2 family. NDH-1 is composed of 14 different subunits. Subunits NuoA, H, J, K, L, M, N constitute the membrane sector of the complex.

It localises to the cell inner membrane. The catalysed reaction is a quinone + NADH + 5 H(+)(in) = a quinol + NAD(+) + 4 H(+)(out). In terms of biological role, NDH-1 shuttles electrons from NADH, via FMN and iron-sulfur (Fe-S) centers, to quinones in the respiratory chain. The immediate electron acceptor for the enzyme in this species is believed to be ubiquinone. Couples the redox reaction to proton translocation (for every two electrons transferred, four hydrogen ions are translocated across the cytoplasmic membrane), and thus conserves the redox energy in a proton gradient. The protein is NADH-quinone oxidoreductase subunit N of Gluconacetobacter diazotrophicus (strain ATCC 49037 / DSM 5601 / CCUG 37298 / CIP 103539 / LMG 7603 / PAl5).